Here is a 518-residue protein sequence, read N- to C-terminus: Ethanolamine kinase (518 aa).

Residues 1–19 (MGTETKSNSYTGQISTSGG) show a composition bias toward polar residues. Residues 1–88 (MGTETKSNSY…DIRAKPEDKS (88 aa)) are disordered. Low complexity predominate over residues 33–68 (QTVNQQTLSLSQSNQVQNQLNSHSNSNSYPNPSGSE). Residues 69–88 (NKNENEQNSRDIRAKPEDKS) are compositionally biased toward basic and acidic residues. Phosphoserine is present on residues serine 190 and serine 194.

Belongs to the choline/ethanolamine kinase family.

Its subcellular location is the cytoplasm. It carries out the reaction ethanolamine + ATP = phosphoethanolamine + ADP + H(+). The protein operates within phospholipid metabolism; phosphatidylethanolamine biosynthesis; phosphatidylethanolamine from ethanolamine: step 1/3. Its function is as follows. Highly specific for ethanolamine phosphorylation. May be a rate-controlling step in phosphatidylethanolamine biosynthesis. The chain is Ethanolamine kinase (eas) from Drosophila melanogaster (Fruit fly).